The chain runs to 1034 residues: Sodium bicarbonate cotransporter 3 (1034 aa).

Disordered regions lie at residues 1–31 and 53–99; these read MEAD…KTSS and HVPF…SQRV. At 1 to 476 the chain is on the extracellular side; that stretch reads MEADGAGEQM…DFKDALSLQC (476 aa). Residues Ser-57, Ser-60, Ser-89, and Ser-155 each carry the phosphoserine modification. Residues 60–77 are compositionally biased toward basic residues; that stretch reads SRRRHKHRGHKHHHRRRK. Basic and acidic residues predominate over residues 78–90; that stretch reads DKDSDKEDGRESP. N-linked (GlcNAc...) asparagine glycosylation is present at Asn-176. Ser-238, Ser-250, Ser-260, Met-263, Ser-268, and Ser-271 each carry phosphoserine. Positions 250–260 are enriched in polar residues; it reads SAPGNLDNSKS. The interval 250–276 is disordered; the sequence is SAPGNLDNSKSGEMKGNGSGGSRENST. A glycan (N-linked (GlcNAc...) asparagine) is linked at Asn-274. Phosphoserine occurs at positions 275 and 424. The chain crosses the membrane as a helical span at residues 477-497; sequence LASILFLYCACMSPVITFGGL. The Cytoplasmic segment spans residues 498 to 505; it reads LGEATEGR. Residues 506–526 traverse the membrane as a helical segment; sequence ISAIESLFGASLTGIAYSLFA. The Extracellular portion of the chain corresponds to 527–563; the sequence is GQPLTILGSTGPVLVFEKILFKFCRDYHLSYLSLRTS. The helical transmembrane segment at 564 to 584 threads the bilayer; sequence IGLWTSFLCIVLVATDASSLV. The Cytoplasmic portion of the chain corresponds to 585–593; that stretch reads CYITRFTEE. The helical transmembrane segment at 594 to 614 threads the bilayer; it reads AFAALICIIFIYEALEKLFHL. Residues 615-685 are Extracellular-facing; sequence GEIYAFNMHN…MFVGSACGPH (71 aa). Cys-634 and Cys-636 are disulfide-bonded. N-linked (GlcNAc...) asparagine glycans are attached at residues Asn-644, Asn-654, and Asn-664. Cys-670 and Cys-682 are oxidised to a cystine. The chain crosses the membrane as a helical span at residues 686-706; sequence GPYVPDVLFWCVVLFFTTFFL. At 707–729 the chain is on the cytoplasmic side; the sequence is SSFLKQFKTKGYFPTKVRSTISD. Residues 730-750 traverse the membrane as a helical segment; it reads FAVFLTIVIMVAIDYLVGIPS. Residues 751-776 lie on the Extracellular side of the membrane; the sequence is PKLHVPEKFEPTDPSRGWIISPLGDN. A helical membrane pass occupies residues 777–797; the sequence is PWWTLLIAAVPALLCTILIFM. Topologically, residues 798-812 are cytoplasmic; that stretch reads DQQITAVIINRKEHK. Residues 813–833 form a helical membrane-spanning segment; it reads LKFIPMPVLYGVFLYMGVSSL. Positions 815 to 915 are essential for cell membrane localization and transport activity; the sequence is FIPMPVLYGV…MDLCFTKREL (101 aa). Over 834 to 876 the chain is Extracellular; that stretch reads KGIQFFDRIKLFGMPAKHQPDLIYLRYVPLWKVHVFTVVQLTC. A helical transmembrane segment spans residues 877-897; it reads LVLLWVIKASAAAVVFPMMVL. At 898-1034 the chain is on the cytoplasmic side; it reads ALVFVRKLMD…KKYMDAETSL (137 aa). The CA2-binding stretch occupies residues 918 to 920; that stretch reads LDD. The disordered stretch occupies residues 926 to 946; the sequence is KKKKEDDKKKKEKEEAERMLQ. Thr-951 bears the Phosphothreonine mark. 2 positions are modified to phosphoserine: Ser-960 and Ser-1033. The PDZ-binding motif lies at 1031 to 1034; that stretch reads ETSL.

Belongs to the anion exchanger (TC 2.A.31) family. Forms a complex with ATP6V1B1 and NHERF1/EBP50. Interacts in a pH dependent-manner with CA2/carbonic anhydrase 2. Interacts with CFTR through NHERF1/EBP50. Interacts with USH1C. As to expression, expressed in the spiral ligament throughout the cochlea and in photoreceptors of the outer plexiform layer of the retina (at protein level).

It is found in the basolateral cell membrane. Its subcellular location is the apical cell membrane. The protein resides in the cell projection. It localises to the stereocilium. The protein localises to the cell membrane. It catalyses the reaction hydrogencarbonate(in) + Na(+)(in) = hydrogencarbonate(out) + Na(+)(out). Its activity is regulated as follows. Activity is inhibited by 4,4'-di-isothiocyanatostilbene-2,2'-disulfonic acid (DIDS - an inhibitor of several anion channels and transporters). Electroneutral sodium- and bicarbonate-dependent cotransporter with a Na(+):HCO3(-) 1:1 stoichiometry. Mediates the sodium-dependent bicarbonate transport important for pH recovery after acid load as well as for regulation of steady-state pH in the duodenum and vascular smooth muscle cells. Plays a key role in macrophage acidification, mediating bicarbonate import into the cytoplasm which is crucial for net acid extrusion and maintenance of cytoplasmic pH during phagocytosis. Provides cellular bicarbonate for de novo purine and pyrimidine synthesis and is a key mediator of de novo nucleotide synthesis downstream of mTORC1 signaling in proliferating cells. May be involved in maintaining locomotor activity, exploratory behavior, and hearing. The chain is Sodium bicarbonate cotransporter 3 (Slc4a7) from Mus musculus (Mouse).